The chain runs to 440 residues: C4-dicarboxylate transport protein (440 aa).

Transmembrane regions (helical) follow at residues 8-28 (LYLQ…LFPA), 40-60 (FIKL…VTGI), 74-94 (LKGL…GLVV), 147-167 (GDIL…AALK), 187-207 (IVGF…AFTV), 221-241 (LIAC…GLVL), 288-308 (VVGL…SIYL), and 354-374 (AATL…LLGV). Positions 419–440 (EEVEPANEPEPPAVPAGAGLHG) are disordered.

Belongs to the dicarboxylate/amino acid:cation symporter (DAACS) (TC 2.A.23) family.

It is found in the cell inner membrane. Its function is as follows. Responsible for the transport of dicarboxylates such as succinate, fumarate, and malate from the periplasm across the membrane. The sequence is that of C4-dicarboxylate transport protein from Anaeromyxobacter dehalogenans (strain 2CP-1 / ATCC BAA-258).